The chain runs to 30 residues: Photosystem I reaction center subunit XII (30 aa).

A helical membrane pass occupies residues 7 to 26 (IMVALFAALFTGILALRLGT).

This sequence belongs to the PsaM family.

The protein resides in the plastid. Its subcellular location is the chloroplast thylakoid membrane. The sequence is that of Photosystem I reaction center subunit XII from Mesostigma viride (Green alga).